We begin with the raw amino-acid sequence, 919 residues long: Phosphoenolpyruvate carboxylase (919 aa).

Active-site residues include His-138 and Lys-579.

Belongs to the PEPCase type 1 family. The cofactor is Mg(2+).

It catalyses the reaction oxaloacetate + phosphate = phosphoenolpyruvate + hydrogencarbonate. Its function is as follows. Forms oxaloacetate, a four-carbon dicarboxylic acid source for the tricarboxylic acid cycle. The protein is Phosphoenolpyruvate carboxylase of Corynebacterium glutamicum (Brevibacterium saccharolyticum).